Reading from the N-terminus, the 461-residue chain is MNLTLDHTTLHRAAKYFMDSGKAASHEAAMNLLQQFGLTIYVGEEIRSSAAHQIALLTIVNVTRRTLLGGVEVIGLPDCDSLTALAPNTGLKEAVMALGGTPVAVARPEWPTALIGSVEDYSNKDTAWRVTWEGWRAGAAPLMIGDRLSEDNSMALAPALAAAVCAGEVFSHYAGDHPMAGRRTAGLSLWQPGADWLDVDESEPELAFLPSNLWIIGLGNLGQAFAWLLALMPYETPQELQLVLQDYDRIAPSNDSTSLLSYKHDTNKMKARVVADWLDKRGFTTFIEERRFGPWTKRHADEPGVALCGVDNALARSALDQAGFPLIVEAGLGGGPQAFRSLGIHTFPSSRTAAEIWAKQVALADTSTEDMPAYQALKKSGIDACGLTQLASRTVGVPFVGLIAACLAMSELLRRLHGGKAFEFIAGSTATLQDIEFGTLHAPPYAHGYTRAMPMGWPTAP.

Cys-385 functions as the Glycyl thioester intermediate in the catalytic mechanism.

In terms of biological role, component of the Bil (bacterial ISG15-like) antiviral defense system, composed of BilA, BilB, BilC and BilD. The Bil system specifically conjugates a ubiquitin-like moiety (bilA) to the bacteriophage central tail fiber (CTF, or tip attachment protein J) via reactions involving E1 (bilD) and E2 (bilB). Modifies CTF of phage SECphi27 and SECphi4, which probably interferes with assembly of the phage tail. Also modifies T5 baseplate hub protein pb3 (gene D16), but not gp27 of phage T6 (Bil defends against T6). BilD (E1) catalyzes the first step in conjugation. Activates ubiquitin-like BilA by first adenylating its C-terminal glycine residue with ATP, and then conjugates it to the side chain of a cysteine residue in E1 (this protein), yielding a ubiquitin-E1 thioester and free AMP. Bil-encoding bacteria produce mostly defective phage SECphi27, many of which have phage assembly defects, including no tails. SECphi27 phage progeny produced in E.coli with the Bil system inject less DNA into naive host cells, maybe because the phage are less able to adsorb and inject their DNA into host cells. Functionally, expression of the Bil system in E.coli (strain MG1655) confers about 100-fold resistance to phage SECphi27, SECphi18, SECphi6, SECphi4 and T5, but not to SECphi17. When cells expressing the Bil system are infected by phage SECphi27 at low multiplicity of infection (0.03 MOI) the culture survives, at 3.0 MOI the culture collapses at the same time as cells without the Bil system. This chain is Bacterial E1-like protein BilD, found in Collimonas sp. (strain OK412).